A 302-amino-acid chain; its full sequence is NAD kinase 2 (302 aa).

The Proton acceptor role is filled by Asp-78. NAD(+) is bound by residues 78-79 (DG), 152-153 (NE), Asp-182, 193-198 (TAYSLS), and Ala-217.

Belongs to the NAD kinase family. A divalent metal cation serves as cofactor.

The protein resides in the cytoplasm. The catalysed reaction is NAD(+) + ATP = ADP + NADP(+) + H(+). In terms of biological role, involved in the regulation of the intracellular balance of NAD and NADP, and is a key enzyme in the biosynthesis of NADP. Catalyzes specifically the phosphorylation on 2'-hydroxyl of the adenosine moiety of NAD to yield NADP. In Prochlorococcus marinus (strain SARG / CCMP1375 / SS120), this protein is NAD kinase 2.